The sequence spans 333 residues: EP300-interacting inhibitor of differentiation 3 (333 aa).

Belongs to the NSE4 family. Component of the SMC5-SMC6 complex which consists at least of SMC5, SMC6, NSMCE2, NSMCE1, NSMCE4A or EID3 and NSMCE3; EID3 seems to be a testis-specific subunit. NSMCE1, NSMCE4A or EID3 and NSMCE3 probably form a subcomplex that bridges the head domains of the SMC5:SMC6 heterodimer. Homodimer, and heterodimer with EID2. Interacts with the C-terminal region of CREBBP. As to expression, highly expressed in testis.

Its subcellular location is the nucleus. The protein resides in the cytoplasm. It is found in the chromosome. It localises to the telomere. Tissue-specific component of the SMC5-SMC6 complex, a complex involved in repair of DNA double-strand breaks by homologous recombination. The complex may promote sister chromatid homologous recombination by recruiting the SMC1-SMC3 cohesin complex to double-strand breaks. The complex is required for telomere maintenance via recombination and mediates sumoylation of shelterin complex (telosome) components. In terms of biological role, acts as a repressor of nuclear receptor-dependent transcription possibly by interfering with CREBBP-dependent coactivation. May function as a coinhibitor of other CREBBP/EP300-dependent transcription factors. This chain is EP300-interacting inhibitor of differentiation 3, found in Homo sapiens (Human).